The following is a 459-amino-acid chain: MIKVRFAPSPTGYIHIGNIRIALFNWLYAQAHNGAFILRYDDTDVERSKQEYIDAIAADLEWLDIQPDEIYYQSKRFNRYDEVAEMLKQRGLLYPCYETAEELDRRRKIQLSRKLPPVYDRAALKLTPEEKEEFESQGRKPHWRFLLPNFENNPLQTKRTEVCWNDVVKGKQTIDLASLSDPVLIREGGSYLYTLPSVVDDIDMAITHIIRGDDHITNTGVQIALFEALNAQLPIFGHINLLTTVLGKGLSKRDNDLSIHSLRAEGFESIAIQCFAVLIGTSQNVHPYPHQAALLKHFNLQDTSRSVTKFDIADLFALNSHLVHDLTYEEVKTRLKNLSIDGEKAECFWNAIRSNIDKVNDAVLWWKMIHDEQSFDPVALEDRSFVRQSLNFLPEGPLNDESWKVWTTTLKEKTGRRGKALFMPLRQALTGMDHGPEMGKLLQLLGREKVIDRLTIQGE.

The short motif at 8–18 is the 'HIGH' region element; the sequence is PSPTGYIHIGN. A 'KMSKS' region motif is present at residues 249–253; the sequence is GLSKR. Position 252 (Lys252) interacts with ATP.

It belongs to the class-I aminoacyl-tRNA synthetase family. Glutamate--tRNA ligase type 1 subfamily. In terms of assembly, monomer.

Its subcellular location is the cytoplasm. The enzyme catalyses tRNA(Glu) + L-glutamate + ATP = L-glutamyl-tRNA(Glu) + AMP + diphosphate. Its function is as follows. Catalyzes the attachment of glutamate to tRNA(Glu) in a two-step reaction: glutamate is first activated by ATP to form Glu-AMP and then transferred to the acceptor end of tRNA(Glu). The protein is Glutamate--tRNA ligase 1 of Bartonella quintana (strain Toulouse) (Rochalimaea quintana).